The primary structure comprises 393 residues: Nucleosome assembly protein 1-like 1 (393 aa).

A compositionally biased stretch (basic and acidic residues) spans 1–10 (MANIDNKEQT). Disordered regions lie at residues 1-36 (MANI…NSKA) and 132-165 (ECEW…KEDP). Composition is skewed to acidic residues over residues 11–30 (ELDQ…EAGE) and 132–144 (ECEW…EDIS). An NAP1L motif motif is present at residues 126–151 (YEPTEEECEWKVDEEEDISGDLKDKA). The span at 145-165 (GDLKDKAKLEEEKKDEEKEDP) shows a compositional bias: basic and acidic residues. Positions 274–280 (IKKKQKH) match the Nuclear localization signal motif. Positions 347 to 378 (AIEDDDDDYDEEGEEADDEEGEEEADEDNDPD) are enriched in acidic residues. Positions 347-393 (AIEDDDDDYDEEGEEADDEEGEEEADEDNDPDYEPKKDQNPAECKQQ) are disordered. A compositionally biased stretch (basic and acidic residues) spans 379–393 (YEPKKDQNPAECKQQ).

Belongs to the nucleosome assembly protein (NAP) family. As to quaternary structure, forms homomultimers. Interacts with histone B4. Interacts with the B-type cyclins ccnb1 and ccnb2. Phosphorylated by cyclin B-cdc2 kinase complexes.

The protein localises to the cytoplasm. It localises to the nucleus. Acts as a chaperone for the linker histone to facilitate deposition of histone B4 onto linker DNA. Required for both remodeling of sperm chromatin into nucleosomes, and linker histone binding to nucleosome core dimers. Plays a role in tissue-specific gene regulation. Required for primitive hemopoiesis, acting upstream of tal1/scl. In Xenopus tropicalis (Western clawed frog), this protein is Nucleosome assembly protein 1-like 1.